Here is a 231-residue protein sequence, read N- to C-terminus: Large ribosomal subunit protein uL1 (231 aa).

The protein belongs to the universal ribosomal protein uL1 family. In terms of assembly, part of the 50S ribosomal subunit.

Its function is as follows. Binds directly to 23S rRNA. The L1 stalk is quite mobile in the ribosome, and is involved in E site tRNA release. In terms of biological role, protein L1 is also a translational repressor protein, it controls the translation of the L11 operon by binding to its mRNA. The chain is Large ribosomal subunit protein uL1 from Clostridium kluyveri (strain NBRC 12016).